The following is a 656-amino-acid chain: Cyclic AMP-dependent transcription factor ATF-6 alpha (656 aa).

Residues 1–137 (MESPFSPVLP…SPSSVEPLKE (137 aa)) form a transcription activation region. Topologically, residues 1 to 377 (MESPFSPVLP…VMIVLAFIML (377 aa)) are cytoplasmic. Lys75 is covalently cross-linked (Glycyl lysine isopeptide (Lys-Gly) (interchain with G-Cter in SUMO2)). Residues 75 to 169 (KAEPQPLSPA…MSSKPSVQPK (95 aa)) form a disordered region. Low complexity-rich tracts occupy residues 78–101 (PQPL…SCSS) and 111–121 (LLSSSQSPLSL). Lys139 is covalently cross-linked (Glycyl lysine isopeptide (Lys-Gly) (interchain with G-Cter in ubiquitin)). The bZIP domain occupies 293 to 356 (VLRRQQRMIK…DEVVSENQRL (64 aa)). Residues 295-326 (RRQQRMIKNRESACQSRKKKKEYMLGLEARLK) form a basic motif region. Residues 335–342 (LKKENGSL) form a leucine-zipper region. A helical; Signal-anchor for type II membrane protein membrane pass occupies residues 378-398 (NYGPMSMLEQESRRVKPSVSP). A disordered region spans residues 391 to 429 (RVKPSVSPANQRRHLLEFSAKEVKDTSDGDNQKDSYSYD). At 399 to 656 (ANQRRHLLEF…VVSTIPESLQ (258 aa)) the chain is on the lumenal side. The segment covering 404 to 427 (HLLEFSAKEVKDTSDGDNQKDSYS) has biased composition (basic and acidic residues). The interval 455 to 575 (QPLINTTESL…ATTHNKTTRP (121 aa)) is interaction with THBS4. Residues Asn459, Asn570, and Asn629 are each glycosylated (N-linked (GlcNAc...) asparagine). Residues 632–650 (STFFGSPPTTTETTHVVST) are compositionally biased toward low complexity. The disordered stretch occupies residues 632-656 (STFFGSPPTTTETTHVVSTIPESLQ).

It belongs to the bZIP family. ATF subfamily. In terms of assembly, interacts with XBP1 isoform 2; the interaction occurs in a ER stress-dependent manner. Interacts with LACC1. As to quaternary structure, interacts with THBS4 (via EGF-like 3; calcium-binding domain) which facilitates its processing, activation and nuclear translocation. Interacts (via lumenal domain) with THBS1. Homodimer and heterodimer with ATF6-beta. The dimer interacts with the nuclear transcription factor Y (NF-Y) trimer through direct binding to NF-Y subunit C (NF-YC). Also interacts with the transcription factors GTF2I, YY1 and SRF. Post-translationally, during unfolded protein response, a fragment of approximately 50 kDa containing the cytoplasmic transcription factor domain is released by proteolysis. The cleavage seems to be performed sequentially by site-1 (MBTPS1, S1P) and site-2 (MBTPS2, S2P) proteases. N-glycosylated; in its luminal domain. The glycosylation status may serve as a sensor for ER homeostasis, resulting in ATF6 activation to trigger the unfolded protein response (UPR). In terms of processing, ubiquitinated by RNF186 at Lys-139, which is required for pattern recognition receptor-induced unfolded protein response-associated outcomes.

Its subcellular location is the endoplasmic reticulum membrane. It is found in the golgi apparatus membrane. The protein localises to the nucleus. Precursor of the transcription factor form (Processed cyclic AMP-dependent transcription factor ATF-6 alpha), which is embedded in the endoplasmic reticulum membrane. Endoplasmic reticulum stress promotes processing of this form, releasing the transcription factor form that translocates into the nucleus, where it activates transcription of genes involved in the unfolded protein response (UPR). In terms of biological role, transcription factor that initiates the unfolded protein response (UPR) during endoplasmic reticulum stress by activating transcription of genes involved in the UPR. Binds DNA on the 5'-CCAC[GA]-3'half of the ER stress response element (ERSE) (5'-CCAAT-N(9)-CCAC[GA]-3') and of ERSE II (5'-ATTGG-N-CCACG-3'). Binding to ERSE requires binding of NF-Y to ERSE. Could also be involved in activation of transcription by the serum response factor. May play a role in foveal development and cone function in the retina. This Mus musculus (Mouse) protein is Cyclic AMP-dependent transcription factor ATF-6 alpha (Atf6).